Here is a 324-residue protein sequence, read N- to C-terminus: Beta-ketoacyl-[acyl-carrier-protein] synthase III (324 aa).

Catalysis depends on residues Cys-114 and His-246. The tract at residues 247–251 is ACP-binding; the sequence is QANLR. Asn-276 is an active-site residue.

Belongs to the thiolase-like superfamily. FabH family. In terms of assembly, homodimer.

The protein localises to the cytoplasm. The enzyme catalyses malonyl-[ACP] + acetyl-CoA + H(+) = 3-oxobutanoyl-[ACP] + CO2 + CoA. Its pathway is lipid metabolism; fatty acid biosynthesis. In terms of biological role, catalyzes the condensation reaction of fatty acid synthesis by the addition to an acyl acceptor of two carbons from malonyl-ACP. Catalyzes the first condensation reaction which initiates fatty acid synthesis and may therefore play a role in governing the total rate of fatty acid production. Possesses both acetoacetyl-ACP synthase and acetyl transacylase activities. Its substrate specificity determines the biosynthesis of branched-chain and/or straight-chain of fatty acids. The protein is Beta-ketoacyl-[acyl-carrier-protein] synthase III of Campylobacter jejuni subsp. jejuni serotype O:6 (strain 81116 / NCTC 11828).